An 859-amino-acid polypeptide reads, in one-letter code: Bifunctional levopimaradiene synthase, chloroplastic (859 aa).

The N-terminal 52 residues, 1 to 52 (MALLSSSLSSHIPTGAHHLTLNAYANTQCIPHFFSTLNAGTSAGKRSSLYLR), are a transit peptide targeting the chloroplast. Residues Asp-392, Asp-394, Asp-611, Asp-615, Asn-755, and Glu-763 each coordinate Mg(2+). The short motif at 392-395 (DIDD) is the DXDD motif element. Positions 611–615 (DDLYD) match the DDXXD motif motif.

The protein belongs to the terpene synthase family. Tpsd subfamily. Requires Mg(2+) as cofactor. The cofactor is Mn(2+).

The protein localises to the plastid. The protein resides in the chloroplast. The catalysed reaction is (+)-copalyl diphosphate = abieta-8(14),12-diene + diphosphate. It catalyses the reaction (+)-copalyl diphosphate = abieta-7,13-diene + diphosphate. It functions in the pathway secondary metabolite biosynthesis; terpenoid biosynthesis. Its pathway is terpene metabolism; oleoresin biosynthesis. In terms of biological role, terpene synthase (di-TPS) involved in the biosynthesis of diterpene natural products included in conifer oleoresin secretions and volatile emissions; these compounds contribute to biotic and abiotic stress defense against herbivores and pathogens. Catalyzes the conversion of (+)-copalyl diphosphate ((+)-CPP) to isopimaradiene. The protein is Bifunctional levopimaradiene synthase, chloroplastic of Picea sitchensis (Sitka spruce).